Here is a 70-residue protein sequence, read N- to C-terminus: DNA-directed RNA polymerase subunit omega (70 aa).

It belongs to the RNA polymerase subunit omega family. In terms of assembly, the RNAP catalytic core consists of 2 alpha, 1 beta, 1 beta' and 1 omega subunit. When a sigma factor is associated with the core the holoenzyme is formed, which can initiate transcription.

It catalyses the reaction RNA(n) + a ribonucleoside 5'-triphosphate = RNA(n+1) + diphosphate. Its function is as follows. Promotes RNA polymerase assembly. Latches the N- and C-terminal regions of the beta' subunit thereby facilitating its interaction with the beta and alpha subunits. The polypeptide is DNA-directed RNA polymerase subunit omega (Bacillus cereus (strain B4264)).